Consider the following 359-residue polypeptide: 3-dehydroquinate synthase (359 aa).

NAD(+)-binding positions include 70 to 75 (DAEGGK), 104 to 108 (GAATD), 128 to 129 (TT), Lys141, and Lys150. Zn(2+) contacts are provided by Glu183, His246, and His262.

Belongs to the sugar phosphate cyclases superfamily. Dehydroquinate synthase family. The cofactor is Co(2+). It depends on Zn(2+) as a cofactor. NAD(+) is required as a cofactor.

It is found in the cytoplasm. The enzyme catalyses 7-phospho-2-dehydro-3-deoxy-D-arabino-heptonate = 3-dehydroquinate + phosphate. Its pathway is metabolic intermediate biosynthesis; chorismate biosynthesis; chorismate from D-erythrose 4-phosphate and phosphoenolpyruvate: step 2/7. Its function is as follows. Catalyzes the conversion of 3-deoxy-D-arabino-heptulosonate 7-phosphate (DAHP) to dehydroquinate (DHQ). This Mycolicibacterium vanbaalenii (strain DSM 7251 / JCM 13017 / BCRC 16820 / KCTC 9966 / NRRL B-24157 / PYR-1) (Mycobacterium vanbaalenii) protein is 3-dehydroquinate synthase.